The primary structure comprises 126 residues: Nuclear transport factor 2B (126 aa).

Ser-2 is modified (N-acetylserine). One can recognise an NTF2 domain in the interval 9–123 (VSKAFVEHYY…FYVFNDIFRL (115 aa)).

In terms of assembly, interacts with RAN1. Expressed in roots, stems, leaves and flowers, and, at low levels, in siliques.

The protein localises to the cytoplasm. It localises to the nucleus. Its subcellular location is the nucleus envelope. Facilitates protein transport into the nucleus. Interacts with various nucleoporins and with Ran-GDP. Could be part of a multicomponent system of cytosolic factors that assemble at the pore complex during nuclear import. In Arabidopsis thaliana (Mouse-ear cress), this protein is Nuclear transport factor 2B.